We begin with the raw amino-acid sequence, 129 residues long: ATP synthase epsilon chain (129 aa).

Belongs to the ATPase epsilon chain family. In terms of assembly, F-type ATPases have 2 components, CF(1) - the catalytic core - and CF(0) - the membrane proton channel. CF(1) has five subunits: alpha(3), beta(3), gamma(1), delta(1), epsilon(1). CF(0) has three main subunits: a, b and c.

It is found in the cell inner membrane. Produces ATP from ADP in the presence of a proton gradient across the membrane. In Campylobacter jejuni subsp. jejuni serotype O:6 (strain 81116 / NCTC 11828), this protein is ATP synthase epsilon chain.